A 427-amino-acid chain; its full sequence is Isoprenylcysteine alpha-carbonyl methylesterase ICME (427 aa).

A disordered region spans residues 26–59; sequence EVLPDEDSDRTTLLNGEPLRRRVSGKSPVDEGPR. 2 helical membrane passes run 102–122 and 157–177; these read LLAL…VAYS and VVVF…GSLL. Residues 163-165 and 234-236 contribute to the substrate site; these read GGA and QSA. Catalysis depends on residues serine 235, aspartate 336, and histidine 368.

The protein belongs to the AB hydrolase superfamily. Isoprenylcysteine methylesterase family. In terms of tissue distribution, expressed in roots, rosette and cauline leaves, stems, flowers and siliques.

It localises to the endoplasmic reticulum membrane. The protein resides in the golgi apparatus membrane. The catalysed reaction is [protein]-C-terminal S-[(2E,6E)-farnesyl]-L-cysteine methyl ester + H2O = [protein]-C-terminal S-[(2E,6E)-farnesyl]-L-cysteine + methanol + H(+). Catalyzes the demethylation of isoprenylcysteine methylesters. In vitro, is specific for N-acetyl-S-farnesyl-L-cysteine methyl ester (AFCme) and has low activity toward N-acetyl-S-geranyl-L-cysteine methyl ester (AGCme). Acts as a positive regulator of ABA signaling. May be involved in the demethylation and inactivation of isoprenylated negative regulators of abscisic acid (ABA) signaling. Carboxyl methylation is a reversible and potentially regulated step in the post-translational modification of prenylated proteins. The protein is Isoprenylcysteine alpha-carbonyl methylesterase ICME of Arabidopsis thaliana (Mouse-ear cress).